The following is a 271-amino-acid chain: Type III pantothenate kinase (271 aa).

6-13 (DVRNTNIV) contacts ATP. Substrate is bound at residue 109–112 (GADR). The Proton acceptor role is filled by Asp-111. Asp-131 serves as a coordination point for K(+). Thr-134 contacts ATP. Residue Thr-186 coordinates substrate.

The protein belongs to the type III pantothenate kinase family. Homodimer. The cofactor is NH4(+). K(+) is required as a cofactor.

The protein localises to the cytoplasm. The catalysed reaction is (R)-pantothenate + ATP = (R)-4'-phosphopantothenate + ADP + H(+). Its pathway is cofactor biosynthesis; coenzyme A biosynthesis; CoA from (R)-pantothenate: step 1/5. Catalyzes the phosphorylation of pantothenate (Pan), the first step in CoA biosynthesis. The protein is Type III pantothenate kinase of Rhodococcus jostii (strain RHA1).